A 236-amino-acid chain; its full sequence is 2-C-methyl-D-erythritol 4-phosphate cytidylyltransferase (236 aa).

The protein belongs to the IspD/TarI cytidylyltransferase family. IspD subfamily. As to quaternary structure, homodimer.

It carries out the reaction 2-C-methyl-D-erythritol 4-phosphate + CTP + H(+) = 4-CDP-2-C-methyl-D-erythritol + diphosphate. Its pathway is isoprenoid biosynthesis; isopentenyl diphosphate biosynthesis via DXP pathway; isopentenyl diphosphate from 1-deoxy-D-xylulose 5-phosphate: step 2/6. Functionally, catalyzes the formation of 4-diphosphocytidyl-2-C-methyl-D-erythritol from CTP and 2-C-methyl-D-erythritol 4-phosphate (MEP). In Klebsiella pneumoniae subsp. pneumoniae (strain ATCC 700721 / MGH 78578), this protein is 2-C-methyl-D-erythritol 4-phosphate cytidylyltransferase.